A 200-amino-acid polypeptide reads, in one-letter code: Peptidyl-tRNA hydrolase (200 aa).

Y16 provides a ligand contact to tRNA. Catalysis depends on H21, which acts as the Proton acceptor. TRNA is bound by residues F67, N69, and N115.

It belongs to the PTH family. As to quaternary structure, monomer.

It is found in the cytoplasm. It carries out the reaction an N-acyl-L-alpha-aminoacyl-tRNA + H2O = an N-acyl-L-amino acid + a tRNA + H(+). Hydrolyzes ribosome-free peptidyl-tRNAs (with 1 or more amino acids incorporated), which drop off the ribosome during protein synthesis, or as a result of ribosome stalling. Functionally, catalyzes the release of premature peptidyl moieties from peptidyl-tRNA molecules trapped in stalled 50S ribosomal subunits, and thus maintains levels of free tRNAs and 50S ribosomes. The chain is Peptidyl-tRNA hydrolase from Prochlorococcus marinus (strain AS9601).